Consider the following 441-residue polypeptide: MQLYNSLSKTKKTLNKKTINLYCCGPTVYNYIHIGNARPILLVDVLIRYLKSRSIKVNYLQNITDIDDKIILKALENNLNELEVSQKYTSAYLEDLKSLNINQPDKIILISQKMNEMIDFIKNLVDINAAYVLDGDVYFDIKKYENEYCKLSGYKLDELISGKRVEIDSKKHYSLDFSLWKKTDIGIKWDSVFGLGRPGWHTECVLLIDEYFNHQTIDIHVGGIDLKFPHHENERIQFIAKNNKELAHIWLHNGHLQINDEKMSKSLGNVILVRDFIKKHNKNTLRWIFLTTNYTQPLNISDDLIYQANKFFEKLTNLSKKTIQFIIKKDLKIKSINSSEYINKFNEYMEDDLNTSLVLSLIDLLIKQINKNIVDKNLDNFNLLIGSLNYILDVLGFDNVFNYKFDNKTKELFLKWQELVKNKEFNKADLIRNKLIEQGIL.

C24 serves as a coordination point for Zn(2+). Residues 26-36 (PTVYNYIHIGN) carry the 'HIGH' region motif. Zn(2+)-binding residues include C204, H230, and E234. The 'KMSKS' region motif lies at 262–266 (KMSKS). K265 is a binding site for ATP.

The protein belongs to the class-I aminoacyl-tRNA synthetase family. Monomer. Zn(2+) serves as cofactor.

The protein resides in the cytoplasm. The enzyme catalyses tRNA(Cys) + L-cysteine + ATP = L-cysteinyl-tRNA(Cys) + AMP + diphosphate. This is Cysteine--tRNA ligase from Mycoplasma mycoides subsp. mycoides SC (strain CCUG 32753 / NCTC 10114 / PG1).